The following is an 869-amino-acid chain: H(+)/Cl(-) exchange transporter 6 (869 aa).

The Cytoplasmic segment spans residues 1–80; it reads MAGCRGSLCC…KKGRWYEVVK (80 aa). 2 helical membrane-spanning segments follow: residues 81 to 113 and 128 to 150; these read WTVVFAIGVCTGLVGLFVDFFVQLFTQLKFGVV and LSLLELLGFNLTFVFLASLLVLI. A Selectivity filter part_1 motif is present at residues 156-160; that stretch reads GSGIP. Residue Ser157 coordinates chloride. Residues 159-166 constitute an intramembrane region (helical); sequence IPEIKCYL. The next 2 helical transmembrane spans lie at 176 to 194 and 200 to 217; these read RLRTLLCKVFGVLFSVAGG and EGPMIHSGAVVGAGLPQF. A Selectivity filter part_2 motif is present at residues 198-202; that stretch reads GKEGP. Intramembrane regions (helical) lie at residues 241 to 253 and 257 to 265; these read FVSAGAAAGIAAA and PIGATLFSL. A run of 3 helical transmembrane segments spans residues 277–294, 335–364, and 371–392; these read TWKVLFCSMSATFTLNFF, GFFVVMGVIGGLLGATFNCLNKRLAKYRMR, and KLVRVLESLLVSLVTTLVVFVA. 3 N-linked (GlcNAc...) asparagine glycosylation sites follow: Asn410, Asn422, and Asn432. The next 2 helical transmembrane spans lie at 462–481 and 487–511; these read PITLALFFVLYFLLACWTYG and GLFVPSLLCGAAFGRLVANVLKSYI. The short motif at 487-491 is the Selectivity filter part_3 element; it reads GLFVP. Phe489 is a binding site for chloride. Positions 519-533 form an intramembrane region, helical; that stretch reads GTFSLIGAAALLGGV. Residues 534–536 constitute an intramembrane region (note=Loop between two helices); sequence VRM. An intramembrane region (helical) is located at residues 537-548; sequence TISLTVILIEST. An intramembrane region (note=Loop between two helices) is located at residues 549–552; the sequence is NEIT. Residues 553 to 571 form a helical membrane-spanning segment; the sequence is YGLPIMITLMVAKWTGDFF. Residues 572-869 are Cytoplasmic-facing; that stretch reads NKGIYDIHVG…ARLRQHYQTI (298 aa). Tyr576 contributes to the chloride binding site. A CBS 1 domain is found at 605–662; it reads MEPNLTYVYPHTRIQSLVSILRTTVHHAFPVVTENRGNEKEFMKGNQLISNNIKFKKS. 630-632 is a binding site for ATP; that stretch reads HHA. The segment at 668-687 is disordered; it reads AGEQRRRSQSMKSYPSSELR. Over residues 677-686 the composition is skewed to polar residues; the sequence is SMKSYPSSEL. At Ser773 the chain carries Phosphoserine. The region spanning 807–868 is the CBS 2 domain; that stretch reads MNPSPFTVSP…QARLRQHYQT (62 aa). 849 to 852 contacts ATP; sequence TRHN.

It belongs to the chloride channel (TC 2.A.49) family. ClC-6/CLCN6 subfamily. N-glycosylated on several asparagine residues.

It is found in the late endosome membrane. The catalysed reaction is 2 chloride(in) + H(+)(out) = 2 chloride(out) + H(+)(in). Functionally, voltage-gated channel mediating the exchange of chloride ions against protons. Functions as antiporter and contributes to the acidification of the late endosome lumen. The CLC channel family contains both chloride channels and proton-coupled anion transporters that exchange chloride or another anion for protons. The presence of conserved gating glutamate residues is typical for family members that function as antiporters. The sequence is that of H(+)/Cl(-) exchange transporter 6 (CLCN6) from Oryctolagus cuniculus (Rabbit).